The chain runs to 218 residues: Peptide methionine sulfoxide reductase MsrA (218 aa).

Cys57 is a catalytic residue.

This sequence belongs to the MsrA Met sulfoxide reductase family.

The catalysed reaction is L-methionyl-[protein] + [thioredoxin]-disulfide + H2O = L-methionyl-(S)-S-oxide-[protein] + [thioredoxin]-dithiol. It catalyses the reaction [thioredoxin]-disulfide + L-methionine + H2O = L-methionine (S)-S-oxide + [thioredoxin]-dithiol. In terms of biological role, has an important function as a repair enzyme for proteins that have been inactivated by oxidation. Catalyzes the reversible oxidation-reduction of methionine sulfoxide in proteins to methionine. This is Peptide methionine sulfoxide reductase MsrA from Brucella suis biovar 1 (strain 1330).